The primary structure comprises 153 residues: Partner of bursicon (153 aa).

Residues 1-35 (MCNSVRTALAASNCCSIVLCCVLLLTLTLTVAVTA) form the signal peptide. 5 cysteine pairs are disulfide-bonded: C44–C102, C68–C117, C77–C143, C81–C145, and C99–C148. The 96-residue stretch at 44-139 (CETLPSEIHL…SATMEIRLKE (96 aa)) folds into the CTCK domain.

In terms of assembly, heterodimer of burs and pburs.

The protein localises to the secreted. In terms of biological role, final heterodimeric neurohormone released at the end of the molting cycle, involved in the sclerotization (tanning) of the insect cuticle, melanization and wing spreading. The polypeptide is Partner of bursicon (Anopheles gambiae (African malaria mosquito)).